A 307-amino-acid polypeptide reads, in one-letter code: D-alanine--D-alanine ligase (307 aa).

The region spanning 108–301 (KEVFAAAGLP…FPEFCAWLVE (194 aa)) is the ATP-grasp domain. 135-185 (LPPPYVVKPNAEGSSVGVYIVHEDANGPPQLAADMPQDLMVETYVPGRELT) is an ATP binding site. The Mg(2+) site is built by D252, E268, and N270.

The protein belongs to the D-alanine--D-alanine ligase family. Mg(2+) serves as cofactor. The cofactor is Mn(2+).

Its subcellular location is the cytoplasm. The enzyme catalyses 2 D-alanine + ATP = D-alanyl-D-alanine + ADP + phosphate + H(+). It functions in the pathway cell wall biogenesis; peptidoglycan biosynthesis. Its function is as follows. Cell wall formation. This is D-alanine--D-alanine ligase from Cereibacter sphaeroides (strain ATCC 17029 / ATH 2.4.9) (Rhodobacter sphaeroides).